The chain runs to 205 residues: Small ribosomal subunit protein uS4c (205 aa).

The region spanning 93–154 is the S4 RNA-binding domain; that stretch reads MRLDNTIFRL…RTQTIALIQQ (62 aa).

This sequence belongs to the universal ribosomal protein uS4 family. As to quaternary structure, part of the 30S ribosomal subunit. Contacts protein S5. The interaction surface between S4 and S5 is involved in control of translational fidelity.

The protein localises to the plastid. It localises to the chloroplast. One of the primary rRNA binding proteins, it binds directly to 16S rRNA where it nucleates assembly of the body of the 30S subunit. In terms of biological role, with S5 and S12 plays an important role in translational accuracy. The chain is Small ribosomal subunit protein uS4c (rps4) from Chaetosphaeridium globosum (Charophycean green alga).